The primary structure comprises 370 residues: Quinolinate synthase (370 aa).

Iminosuccinate contacts are provided by His-62 and Ser-83. Residue Cys-128 coordinates [4Fe-4S] cluster. Residues 154–156 (YAN) and Ser-171 each bind iminosuccinate. Residue Cys-215 coordinates [4Fe-4S] cluster. Iminosuccinate is bound by residues 241 to 243 (HPE) and Thr-258. Position 312 (Cys-312) interacts with [4Fe-4S] cluster.

This sequence belongs to the quinolinate synthase family. Type 1 subfamily. The cofactor is [4Fe-4S] cluster.

The protein resides in the cytoplasm. The enzyme catalyses iminosuccinate + dihydroxyacetone phosphate = quinolinate + phosphate + 2 H2O + H(+). The protein operates within cofactor biosynthesis; NAD(+) biosynthesis; quinolinate from iminoaspartate: step 1/1. Functionally, catalyzes the condensation of iminoaspartate with dihydroxyacetone phosphate to form quinolinate. The chain is Quinolinate synthase from Neisseria meningitidis serogroup B (strain ATCC BAA-335 / MC58).